A 288-amino-acid chain; its full sequence is Fructose-bisphosphate aldolase (288 aa).

Serine 49 lines the D-glyceraldehyde 3-phosphate pocket. Aspartate 84 serves as the catalytic Proton donor. Residues histidine 85, aspartate 105, glutamate 135, and histidine 177 each coordinate Zn(2+). Residue glycine 178 participates in dihydroxyacetone phosphate binding. Histidine 206 contacts Zn(2+). Dihydroxyacetone phosphate-binding positions include 207–209 (GGS) and 228–231 (NINT).

This sequence belongs to the class II fructose-bisphosphate aldolase family. As to quaternary structure, homodimer. Requires Zn(2+) as cofactor.

It carries out the reaction beta-D-fructose 1,6-bisphosphate = D-glyceraldehyde 3-phosphate + dihydroxyacetone phosphate. Its pathway is carbohydrate degradation; glycolysis; D-glyceraldehyde 3-phosphate and glycerone phosphate from D-glucose: step 4/4. Functionally, catalyzes the aldol condensation of dihydroxyacetone phosphate (DHAP or glycerone-phosphate) with glyceraldehyde 3-phosphate (G3P) to form fructose 1,6-bisphosphate (FBP) in gluconeogenesis and the reverse reaction in glycolysis. The sequence is that of Fructose-bisphosphate aldolase (fba) from Mycoplasma pneumoniae (strain ATCC 29342 / M129 / Subtype 1) (Mycoplasmoides pneumoniae).